Here is a 475-residue protein sequence, read N- to C-terminus: Deoxyguanosinetriphosphate triphosphohydrolase-like protein (475 aa).

Positions 118-272 constitute an HD domain; that stretch reads RLTHTLEVAQ…MDLSDDIAYS (155 aa).

This sequence belongs to the dGTPase family. Type 2 subfamily.

The chain is Deoxyguanosinetriphosphate triphosphohydrolase-like protein (dgt) from Bifidobacterium longum (strain NCC 2705).